Consider the following 447-residue polypeptide: ATP-dependent protease ATPase subunit HslU (447 aa).

Residues I18, 60–65 (GVGKTE), D260, E325, and R397 contribute to the ATP site.

This sequence belongs to the ClpX chaperone family. HslU subfamily. In terms of assembly, a double ring-shaped homohexamer of HslV is capped on each side by a ring-shaped HslU homohexamer. The assembly of the HslU/HslV complex is dependent on binding of ATP.

The protein resides in the cytoplasm. Its function is as follows. ATPase subunit of a proteasome-like degradation complex; this subunit has chaperone activity. The binding of ATP and its subsequent hydrolysis by HslU are essential for unfolding of protein substrates subsequently hydrolyzed by HslV. HslU recognizes the N-terminal part of its protein substrates and unfolds these before they are guided to HslV for hydrolysis. This is ATP-dependent protease ATPase subunit HslU from Paraburkholderia phymatum (strain DSM 17167 / CIP 108236 / LMG 21445 / STM815) (Burkholderia phymatum).